We begin with the raw amino-acid sequence, 100 residues long: Urease subunit gamma (100 aa).

It belongs to the urease gamma subunit family. In terms of assembly, heterotrimer of UreA (gamma), UreB (beta) and UreC (alpha) subunits. Three heterotrimers associate to form the active enzyme.

The protein localises to the cytoplasm. It carries out the reaction urea + 2 H2O + H(+) = hydrogencarbonate + 2 NH4(+). The protein operates within nitrogen metabolism; urea degradation; CO(2) and NH(3) from urea (urease route): step 1/1. This Agrobacterium fabrum (strain C58 / ATCC 33970) (Agrobacterium tumefaciens (strain C58)) protein is Urease subunit gamma.